A 659-amino-acid chain; its full sequence is L-type lectin-domain containing receptor kinase V.7 (659 aa).

The signal sequence occupies residues 1 to 25 (MSHKVLQIVLVLLLTLFSSTHNSNG). Residues 22–244 (NSNGNFLMEE…GALYYVMQFS (223 aa)) are legume-lectin like. Over 26–275 (NFLMEEAAAA…PKKSYDRTRR (250 aa)) the chain is Extracellular. 4 N-linked (GlcNAc...) asparagine glycosylation sites follow: asparagine 45, asparagine 64, asparagine 110, and asparagine 192. Residues 276–296 (ILAVCLTLAVFTALVASGIGF) form a helical membrane-spanning segment. Residues 297 to 659 (VFYVRHKKVK…LTNSFVSHGR (363 aa)) lie on the Cytoplasmic side of the membrane. A Protein kinase domain is found at 333 to 595 (FKEKQLLGKG…GLLCAHHTEL (263 aa)). ATP contacts are provided by residues 339 to 347 (LGKGGFGQV) and lysine 362. Aspartate 462 acts as the Proton acceptor in catalysis.

In the C-terminal section; belongs to the protein kinase superfamily. Ser/Thr protein kinase family. The protein in the N-terminal section; belongs to the leguminous lectin family.

The protein localises to the cell membrane. It carries out the reaction L-seryl-[protein] + ATP = O-phospho-L-seryl-[protein] + ADP + H(+). It catalyses the reaction L-threonyl-[protein] + ATP = O-phospho-L-threonyl-[protein] + ADP + H(+). Its function is as follows. Involved in resistance response to the pathogenic oomycetes Phytophthora infestans and Phytophthora capsici and to the pathogenic bacteria Pseudomonas syringae. The chain is L-type lectin-domain containing receptor kinase V.7 from Arabidopsis thaliana (Mouse-ear cress).